Consider the following 468-residue polypeptide: Kynureninase 2 (468 aa).

Pyridoxal 5'-phosphate contacts are provided by residues L134, T135, F162 to D165, D247, H250, and Y272. The residue at position 273 (K273) is an N6-(pyridoxal phosphate)lysine. 2 residues coordinate pyridoxal 5'-phosphate: W312 and N340.

It belongs to the kynureninase family. Homodimer. Pyridoxal 5'-phosphate is required as a cofactor.

It localises to the cytoplasm. It carries out the reaction L-kynurenine + H2O = anthranilate + L-alanine + H(+). The enzyme catalyses 3-hydroxy-L-kynurenine + H2O = 3-hydroxyanthranilate + L-alanine + H(+). It participates in amino-acid degradation; L-kynurenine degradation; L-alanine and anthranilate from L-kynurenine: step 1/1. It functions in the pathway cofactor biosynthesis; NAD(+) biosynthesis; quinolinate from L-kynurenine: step 2/3. Functionally, catalyzes the cleavage of L-kynurenine (L-Kyn) and L-3-hydroxykynurenine (L-3OHKyn) into anthranilic acid (AA) and 3-hydroxyanthranilic acid (3-OHAA), respectively. The chain is Kynureninase 2 (bna5-2) from Aspergillus oryzae (strain ATCC 42149 / RIB 40) (Yellow koji mold).